We begin with the raw amino-acid sequence, 185 residues long: Threonylcarbamoyl-AMP synthase (185 aa).

The 185-residue stretch at 1-185 (MKNLNQVVDA…AKTGNTLRQG (185 aa)) folds into the YrdC-like domain.

Belongs to the SUA5 family. TsaC subfamily.

It is found in the cytoplasm. It carries out the reaction L-threonine + hydrogencarbonate + ATP = L-threonylcarbamoyladenylate + diphosphate + H2O. Its function is as follows. Required for the formation of a threonylcarbamoyl group on adenosine at position 37 (t(6)A37) in tRNAs that read codons beginning with adenine. Catalyzes the conversion of L-threonine, HCO(3)(-)/CO(2) and ATP to give threonylcarbamoyl-AMP (TC-AMP) as the acyladenylate intermediate, with the release of diphosphate. This chain is Threonylcarbamoyl-AMP synthase, found in Aliivibrio fischeri (strain ATCC 700601 / ES114) (Vibrio fischeri).